The primary structure comprises 305 residues: MEEEMTSILHPLDVSDTLDALVINAIDGTGNRDAIIEELSRQPMARMMMEVREINGVPTQFTGVSVYKLRVANCIRRLHLILAGTETDEEISSDIYYTQCIANPAFKGFIFMILTAMEDVVKTIGIPPPLLKYRFVSYHPAEPLDFALCLLISYLENRNVSSSDPSLYVQLQSFLKYAWSTVTPMRKMRRFLCITNTWLLNTLMELSSISPFDSNHVLPHYIIYKHLSSTNGVCDVLISLYECNNLGEAFQVPVSTRGKCSIVINKGLLNGAFQQKWLSDIICDWWHYGRNNLRGEECLFHTYQK.

It belongs to the herpesviridae cytoplasmic envelopment protein 1 family.

The protein localises to the virion. Its subcellular location is the virion tegument. It localises to the host cytoplasm. It is found in the host Golgi apparatus. Its function is as follows. Plays a critical role in cytoplasmic virus egress. Participates in the final step of tegumentation and envelope acquisition within the host cytoplasm. The protein is Cytoplasmic envelopment protein 1 (MDV019) of Gallus gallus (Chicken).